Here is a 462-residue protein sequence, read N- to C-terminus: tRNA-2-methylthio-N(6)-dimethylallyladenosine synthase (462 aa).

The 116-residue stretch at 2–117 (KRYFIHTFGC…LPDIIGRVSA (116 aa)) folds into the MTTase N-terminal domain. The [4Fe-4S] cluster site is built by cysteine 11, cysteine 47, cysteine 80, cysteine 157, cysteine 161, and cysteine 164. The 230-residue stretch at 143-372 (SRGKVTEFVT…QKLQRRISGE (230 aa)) folds into the Radical SAM core domain. Residues 375-437 (AALVGSEVEV…PNQLAGKQVA (63 aa)) enclose the TRAM domain.

This sequence belongs to the methylthiotransferase family. MiaB subfamily. As to quaternary structure, monomer. [4Fe-4S] cluster serves as cofactor.

It localises to the cytoplasm. The catalysed reaction is N(6)-dimethylallyladenosine(37) in tRNA + (sulfur carrier)-SH + AH2 + 2 S-adenosyl-L-methionine = 2-methylsulfanyl-N(6)-dimethylallyladenosine(37) in tRNA + (sulfur carrier)-H + 5'-deoxyadenosine + L-methionine + A + S-adenosyl-L-homocysteine + 2 H(+). Catalyzes the methylthiolation of N6-(dimethylallyl)adenosine (i(6)A), leading to the formation of 2-methylthio-N6-(dimethylallyl)adenosine (ms(2)i(6)A) at position 37 in tRNAs that read codons beginning with uridine. This chain is tRNA-2-methylthio-N(6)-dimethylallyladenosine synthase, found in Myxococcus xanthus (strain DK1622).